A 416-amino-acid chain; its full sequence is MGESPDFISDLPQSIIENILTRLSIRDAIRTSVLSSKWRYKWSTLTDLVFDEKCVSPSNDRCVVETNLVRFITGVLLLHQGPIHKFQLSTSFKQCRPDIDQWLLFLSRNGIKELVLKLGEGEFRVPACLFNCLKLTCLELCHCEFDPPQYFKGFSYLKSLNLHQILVAPEVIESLISGCPLLEFLSLSYFDSLVLSISAPNLMYLYLDGEFKDIFLENTPKLVAISVSMYMHEDVTDFEQSSDYNLVKFLGGVPLLEKLVGYIYFTKYLSIGDDPGRLPLTYIHLKTIELYQVCFEDADEVLVLLRLVTHSPNLKELKVSASPVQPFPLEEEGFDLFERDYFDYKLPSLESVKITDASGIRYELEFIRFLLGTSPVLETVTVSSSLSDKDAKMDMVIELLRYPRVSPRAQLLFLQD.

One can recognise an F-box domain in the interval 5 to 53; that stretch reads PDFISDLPQSIIENILTRLSIRDAIRTSVLSSKWRYKWSTLTDLVFDEK. 5 LRR repeats span residues 115–142, 164–189, 203–229, 238–263, and 294–321; these read VLKLGEGEFRVPACLFNCLKLTCLELCH, QILVAPEVIESLISGCPLLEFLSLSY, MYLYLDGEFKDIFLENTPKLVAISVSM, FEQSSDYNLVKFLGGVPLLEKLVGYI, and CFEDADEVLVLLRLVTHSPNLKELKVSA. In terms of domain architecture, FBD spans 346–384; the sequence is LPSLESVKITDASGIRYELEFIRFLLGTSPVLETVTVSS.

The sequence is that of F-box/FBD/LRR-repeat protein At1g13570 from Arabidopsis thaliana (Mouse-ear cress).